We begin with the raw amino-acid sequence, 401 residues long: Elongation factor Tu (401 aa).

The region spanning 10-211 (KPHLNIGTIG…AVDTYVPNPT (202 aa)) is the tr-type G domain. The G1 stretch occupies residues 19 to 26 (GHVDHGKT). A GTP-binding site is contributed by 19 to 26 (GHVDHGKT). Thr26 serves as a coordination point for Mg(2+). The tract at residues 62-66 (GITIA) is G2. The G3 stretch occupies residues 83–86 (DCPG). Residues 83-87 (DCPGH) and 138-141 (NKAD) each bind GTP. The G4 stretch occupies residues 138-141 (NKAD). The segment at 179–181 (SAL) is G5.

This sequence belongs to the TRAFAC class translation factor GTPase superfamily. Classic translation factor GTPase family. EF-Tu/EF-1A subfamily. In terms of assembly, monomer.

It is found in the cytoplasm. It catalyses the reaction GTP + H2O = GDP + phosphate + H(+). In terms of biological role, GTP hydrolase that promotes the GTP-dependent binding of aminoacyl-tRNA to the A-site of ribosomes during protein biosynthesis. In Leptospira biflexa serovar Patoc (strain Patoc 1 / Ames), this protein is Elongation factor Tu.